The sequence spans 135 residues: UPF0299 membrane protein ECA2828 (135 aa).

4 helical membrane-spanning segments follow: residues F5–G25, A30–L50, G63–M83, and F93–F113.

It belongs to the UPF0299 family.

The protein resides in the cell inner membrane. This is UPF0299 membrane protein ECA2828 from Pectobacterium atrosepticum (strain SCRI 1043 / ATCC BAA-672) (Erwinia carotovora subsp. atroseptica).